The primary structure comprises 201 residues: dITP/XTP pyrophosphatase (201 aa).

Position 7 to 12 (7 to 12) interacts with substrate; it reads SNNAHK. Residue aspartate 72 is the Proton acceptor of the active site. Residue aspartate 72 participates in Mg(2+) binding. Substrate contacts are provided by residues serine 73, 154–157, lysine 177, and 182–183; these read FGYD and HR.

Belongs to the HAM1 NTPase family. Homodimer. Mg(2+) is required as a cofactor.

The enzyme catalyses XTP + H2O = XMP + diphosphate + H(+). It catalyses the reaction dITP + H2O = dIMP + diphosphate + H(+). The catalysed reaction is ITP + H2O = IMP + diphosphate + H(+). Its function is as follows. Pyrophosphatase that catalyzes the hydrolysis of nucleoside triphosphates to their monophosphate derivatives, with a high preference for the non-canonical purine nucleotides XTP (xanthosine triphosphate), dITP (deoxyinosine triphosphate) and ITP. Seems to function as a house-cleaning enzyme that removes non-canonical purine nucleotides from the nucleotide pool, thus preventing their incorporation into DNA/RNA and avoiding chromosomal lesions. The protein is dITP/XTP pyrophosphatase of Leuconostoc mesenteroides subsp. mesenteroides (strain ATCC 8293 / DSM 20343 / BCRC 11652 / CCM 1803 / JCM 6124 / NCDO 523 / NBRC 100496 / NCIMB 8023 / NCTC 12954 / NRRL B-1118 / 37Y).